The following is a 497-amino-acid chain: Signal recognition particle receptor FtsY (497 aa).

2 disordered regions span residues 1-63 (MAKE…TEAE) and 79-130 (AESE…EWQA). Over residues 87–96 (EAEVVAQPEP) the composition is skewed to low complexity. GTP-binding positions include 300–307 (GVNGVGKT), 382–386 (DTAGR), and 446–449 (TKLD).

This sequence belongs to the GTP-binding SRP family. FtsY subfamily. As to quaternary structure, part of the signal recognition particle protein translocation system, which is composed of SRP and FtsY. SRP is a ribonucleoprotein composed of Ffh and a 4.5S RNA molecule. Binds to SecY. Post-translationally, proteolytically cleaved. The cleavage may regulate function and subcellular location of FtsY. Full-length FtsY is found primarily associated with the membrane, while cleaved protein is predominantly present in the cytoplasm.

It localises to the cell inner membrane. It is found in the cytoplasm. The catalysed reaction is GTP + H2O = GDP + phosphate + H(+). With respect to regulation, conformation of the Ffh-FtsY complex and regulation of its GTPase activity are modulated by the 4.5S RNA. Formation of the FfH-FtsY complex leads to a mutual stimulation of both GTPases. In terms of biological role, involved in targeting and insertion of nascent membrane proteins into the cytoplasmic membrane. Acts as a receptor for the complex formed by the signal recognition particle (SRP) and the ribosome-nascent chain (RNC). Interaction with SRP-RNC leads to the transfer of the RNC complex to the Sec translocase for insertion into the membrane, the hydrolysis of GTP by both Ffh and FtsY, and the dissociation of the SRP-FtsY complex into the individual components. In Escherichia coli (strain K12), this protein is Signal recognition particle receptor FtsY.